A 106-amino-acid polypeptide reads, in one-letter code: UPF0145 protein FTL_1249 (106 aa).

This sequence belongs to the UPF0145 family.

This is UPF0145 protein FTL_1249 from Francisella tularensis subsp. holarctica (strain LVS).